The sequence spans 644 residues: Threonine--tRNA ligase (644 aa).

A TGS domain is found at 1–62; the sequence is MSFSITLPDG…DSDSEVAIIT (62 aa). The interval 240–538 is catalytic; that stretch reads DHRTIGRDLD…LTEIYKGAFP (299 aa). The Zn(2+) site is built by C334, H385, and H515.

This sequence belongs to the class-II aminoacyl-tRNA synthetase family. Homodimer. The cofactor is Zn(2+).

It localises to the cytoplasm. The catalysed reaction is tRNA(Thr) + L-threonine + ATP = L-threonyl-tRNA(Thr) + AMP + diphosphate + H(+). In terms of biological role, catalyzes the attachment of threonine to tRNA(Thr) in a two-step reaction: L-threonine is first activated by ATP to form Thr-AMP and then transferred to the acceptor end of tRNA(Thr). Also edits incorrectly charged L-seryl-tRNA(Thr). The sequence is that of Threonine--tRNA ligase from Lactobacillus helveticus (strain DPC 4571).